Consider the following 240-residue polypeptide: Ribose-5-phosphate isomerase (240 aa).

Substrate is bound by residues 34–37, 88–91, and 101–104; these read SGST, DGAD, and KGGG. E110 serves as the catalytic Proton acceptor. Residue K128 coordinates substrate.

This sequence belongs to the ribose 5-phosphate isomerase family.

The protein localises to the cytoplasm. The enzyme catalyses aldehydo-D-ribose 5-phosphate = D-ribulose 5-phosphate. It participates in carbohydrate degradation; pentose phosphate pathway; D-ribose 5-phosphate from D-ribulose 5-phosphate (non-oxidative stage): step 1/1. In terms of biological role, involved in the first step of the non-oxidative branch of the pentose phosphate pathway. It catalyzes the reversible conversion of ribose-5-phosphate to ribulose 5-phosphate. The sequence is that of Ribose-5-phosphate isomerase (RKI1) from Candida albicans (strain SC5314 / ATCC MYA-2876) (Yeast).